Consider the following 40-residue polypeptide: Adenylate kinase (40 aa).

10–15 (GAGKGT) provides a ligand contact to ATP. An NMP region spans residues 30–40 (STGDMFIKAIK). Threonine 31 contacts AMP.

The protein belongs to the adenylate kinase family. Monomer.

Its subcellular location is the cytoplasm. The catalysed reaction is AMP + ATP = 2 ADP. The protein operates within purine metabolism; AMP biosynthesis via salvage pathway; AMP from ADP: step 1/1. Its function is as follows. Catalyzes the reversible transfer of the terminal phosphate group between ATP and AMP. Plays an important role in cellular energy homeostasis and in adenine nucleotide metabolism. The protein is Adenylate kinase (adk) of Staphylococcus carnosus.